A 65-amino-acid polypeptide reads, in one-letter code: Large ribosomal subunit protein bL35 (65 aa).

It belongs to the bacterial ribosomal protein bL35 family.

This is Large ribosomal subunit protein bL35 from Aeromonas salmonicida (strain A449).